The chain runs to 514 residues: WD repeat-containing protein 26 (514 aa).

The CTLH domain occupies 9 to 84; the sequence is EHPSATKFRN…EYLEDGKVLE (76 aa). WD repeat units follow at residues 206 to 245, 252 to 291, 297 to 337, 377 to 416, 419 to 461, and 464 to 504; these read EHCN…HLLK, GHAY…GELR, SHED…DSWE, QEDH…LVRK, GVTQ…PIAE, and GHTR…DHQN.

Forms homooligomers. Identified in the CTLH complex that contains GID4, RANBP9 and/or RANBP10, MKLN1, MAEA, RMND5A (or alternatively its paralog RMND5B), GID8, ARMC8, WDR26 and YPEL5. Within this complex, MAEA, RMND5A (or alternatively its paralog RMND5B), GID8, WDR26, and RANBP9 and/or RANBP10 form the catalytic core, while GID4, MKLN1, ARMC8 and YPEL5 have ancillary roles. Interacts with DDB1-CUL4A/B E3 ligase complexes. Forms a complex composed of at least WDR26, a G-beta:gamma unit, and PLCB2. Interacts with AXIN1.

The protein localises to the cytoplasm. It localises to the nucleus. It is found in the mitochondrion. G-beta-like protein involved in cell signal transduction. Acts as a negative regulator in MAPK signaling pathway. Functions as a scaffolding protein to promote G beta:gamma-mediated PLCB2 plasma membrane translocation and subsequent activation in leukocytes. Core component of the CTLH E3 ubiquitin-protein ligase complex that selectively accepts ubiquitin from UBE2H and mediates ubiquitination and subsequent proteasomal degradation of the transcription factor HBP1. Acts as a negative regulator of the canonical Wnt signaling pathway through preventing ubiquitination of beta-catenin CTNNB1 by the beta-catenin destruction complex, thus negatively regulating CTNNB1 degradation. Protects cells from oxidative stress-induced apoptosis via the down-regulation of AP-1 transcriptional activity as well as by inhibiting cytochrome c release from mitochondria. Also protects cells by promoting hypoxia-mediated autophagy and mitophagy. This is WD repeat-containing protein 26 (Wdr26) from Rattus norvegicus (Rat).